Consider the following 133-residue polypeptide: Ribosome-binding factor A (133 aa).

Belongs to the RbfA family. In terms of assembly, monomer. Binds 30S ribosomal subunits, but not 50S ribosomal subunits or 70S ribosomes.

It is found in the cytoplasm. Functionally, one of several proteins that assist in the late maturation steps of the functional core of the 30S ribosomal subunit. Associates with free 30S ribosomal subunits (but not with 30S subunits that are part of 70S ribosomes or polysomes). Required for efficient processing of 16S rRNA. May interact with the 5'-terminal helix region of 16S rRNA. This is Ribosome-binding factor A from Pseudomonas fluorescens (strain Pf0-1).